We begin with the raw amino-acid sequence, 196 residues long: Cell division protein SepF (196 aa).

The tract at residues 16 to 81 is disordered; that stretch reads EDDEEFNEPA…KRAGSTFTKP (66 aa). Polar residues predominate over residues 56–69; the sequence is RPAQSTSKAQTQTA.

It belongs to the SepF family. Homodimer. Interacts with FtsZ.

Its subcellular location is the cytoplasm. Its function is as follows. Cell division protein that is part of the divisome complex and is recruited early to the Z-ring. Probably stimulates Z-ring formation, perhaps through the cross-linking of FtsZ protofilaments. Its function overlaps with FtsA. The sequence is that of Cell division protein SepF from Lactococcus lactis subsp. lactis (strain IL1403) (Streptococcus lactis).